We begin with the raw amino-acid sequence, 769 residues long: Phosphatidylinositol 4-phosphate 5-kinase 8 (769 aa).

MORN repeat units follow at residues Tyr-16–Ile-38, Tyr-39–Lys-61, Tyr-62–Val-84, Tyr-85–Val-107, Tyr-108–Arg-130, Phe-131–Leu-153, Phe-154–Phe-176, and Tyr-177–Lys-198. The disordered stretch occupies residues Pro-266 to Glu-289. Residues Ser-276–Ser-288 show a composition bias toward polar residues. In terms of domain architecture, PIPK spans Trp-344–Phe-765. The tract at residues Tyr-725–Ser-746 is activation loop.

It carries out the reaction a 1,2-diacyl-sn-glycero-3-phospho-(1D-myo-inositol 4-phosphate) + ATP = a 1,2-diacyl-sn-glycero-3-phospho-(1D-myo-inositol-4,5-bisphosphate) + ADP + H(+). The sequence is that of Phosphatidylinositol 4-phosphate 5-kinase 8 (PIP5K8) from Arabidopsis thaliana (Mouse-ear cress).